The following is a 168-amino-acid chain: Photosystem I assembly protein Ycf3 (168 aa).

TPR repeat units lie at residues 35 to 68 (AFTY…EIDP), 72 to 105 (SYIL…NPFL), and 120 to 153 (GEQA…TPGN).

It belongs to the Ycf3 family.

It localises to the plastid. The protein resides in the chloroplast thylakoid membrane. Functionally, essential for the assembly of the photosystem I (PSI) complex. May act as a chaperone-like factor to guide the assembly of the PSI subunits. This is Photosystem I assembly protein Ycf3 from Illicium oligandrum (Star anise).